A 234-amino-acid polypeptide reads, in one-letter code: Putative gustatory receptor clone PTE38 (234 aa).

Residues 1–11 (MYLFFSNLSFN) traverse the membrane as a helical segment. At 12 to 42 (DICIITTTIPKMLMNVQSHDQSITYLGCLSQ) the chain is on the extracellular side. Cysteines 39 and 121 form a disulfide. Residues 43–62 (VYLIVNFGSIESCLLAVMAY) traverse the membrane as a helical segment. At 63 to 84 (DRYVAICHPLKYTVIMNHYFCV) the chain is on the cytoplasmic side. The chain crosses the membrane as a helical span at residues 85-105 (MLLLFACSLALHMCLFHILMV). Topologically, residues 106–138 (LILTFCTKTEIPHFFCELAHIIKLTCSDNFINY) are extracellular. The helical transmembrane segment at 139-160 (LLIYTVSVLFFGVHIVGIILSY) threads the bilayer. At 161–182 (IYTVSSVLRMSLLGGMYKAFST) the chain is on the cytoplasmic side. A helical transmembrane segment spans residues 183 to 202 (CGSHLSVVSLFYGTGFGVHI). Residues 203–212 (SSPLTDSPRK) lie on the Extracellular side of the membrane. The helical transmembrane segment at 213 to 234 (TVVASVMYTVVTQMHGPFIYSL) threads the bilayer.

The protein belongs to the G-protein coupled receptor 1 family. As to expression, tongue specific.

The protein localises to the cell membrane. Its function is as follows. Possible taste receptor. The protein is Putative gustatory receptor clone PTE38 of Rattus norvegicus (Rat).